A 208-amino-acid chain; its full sequence is uncharacterized protein (208 aa).

Positions 1 to 34 are cleaved as a signal peptide; it reads MPSHCRERLPFALHFFAVAYGASLWILGSHGLAA.

This is an uncharacterized protein from Sinorhizobium fredii (strain NBRC 101917 / NGR234).